Reading from the N-terminus, the 373-residue chain is MAETREEETVSAEASGFSDLSDSEFLEFLDLEDAQESKALVNMPGPSSESLGKDDKPISLQNWKRGLDILSPMERFHLKYLYVTDLATQNWCELQTAYGKELPGFLAPEKAAVLDTGASIHLARELELHDLVTVPVTTKEDAWAIKFLNILLLIPTLQSEGHIREFPVFGEGEGVLLVGVIDELHYTAKGELELAELKTRRRPMLPLEAQKKKDCFQVSLYKYIFDAMVQGKVTPASLIHHTKLCLEKPLGPSVLRHAQQGGFSVKSLGDLMELVFLSLTLSDLPVIDILKIEYIHQETATVLGTEIVAFKEKEVRAKVQHYMAYWMGHREPQGVDVEEAWKCRTCTYADICEWRKGSGVLSSTLAPQVKKAK.

Residue cysteine 92 coordinates [4Fe-4S] cluster. 2 residues coordinate Mg(2+): aspartate 182 and glutamate 196. Cysteine 343, cysteine 346, and cysteine 352 together coordinate [4Fe-4S] cluster.

Belongs to the EXO5 family. As to quaternary structure, monomer; monomeric form has weak exonuclease activity. Homodimer; homodimeric form is unsure but has much higher exonuclease activity, suggesting that it could homodimerize upon DNA-binding. Interacts with the replication protein A (RPA) complex. [4Fe-4S] cluster serves as cofactor. The cofactor is Mg(2+).

The protein localises to the nucleus. It localises to the cytoplasm. Its subcellular location is the cytosol. Single-stranded DNA (ssDNA) bidirectional exonuclease involved in DNA repair. Probably involved in DNA repair following ultraviolet (UV) irradiation and interstrand cross-links (ICLs) damage. Has both 5'-3' and 3'-5' exonuclease activities with a strong preference for 5'-ends. Acts as a sliding exonuclease that loads at ssDNA ends and then slides along the ssDNA prior to cutting; however the sliding and the 3'-5' exonuclease activities are abolished upon binding to the replication protein A (RPA) complex that enforces 5'-directionality activity. In Homo sapiens (Human), this protein is Exonuclease V (EXO5).